The sequence spans 477 residues: Glycogen synthase 1 (477 aa).

K15 is an ADP-alpha-D-glucose binding site.

This sequence belongs to the glycosyltransferase 1 family. Bacterial/plant glycogen synthase subfamily.

The enzyme catalyses [(1-&gt;4)-alpha-D-glucosyl](n) + ADP-alpha-D-glucose = [(1-&gt;4)-alpha-D-glucosyl](n+1) + ADP + H(+). The protein operates within glycan biosynthesis; glycogen biosynthesis. Synthesizes alpha-1,4-glucan chains using ADP-glucose. The sequence is that of Glycogen synthase 1 (glgA1) from Synechocystis sp. (strain ATCC 27184 / PCC 6803 / Kazusa).